The following is a 56-amino-acid chain: Attractin (56 aa).

Disulfide bonds link Cys4–Cys41, Cys13–Cys33, and Cys20–Cys26.

As to expression, produced by the albumen gland of the egg cordons.

It localises to the secreted. In terms of biological role, water-borne pheromone that attract the marine mollusk Aplysia into breeding aggregations and coordinate male and female reproductive behavior within the aggregation. The sequence is that of Attractin (ATT) from Aplysia vaccaria (California black sea hare).